A 137-amino-acid polypeptide reads, in one-letter code: Early nodulin-55-1 (137 aa).

Residues lysine 1–serine 67 form the Phytocyanin domain. Asparagine 13, asparagine 51, and asparagine 68 each carry an N-linked (GlcNAc...) asparagine glycan. Cysteines 20 and 55 form a disulfide. The disordered stretch occupies residues threonine 70–valine 115. Positions proline 80 to serine 98 are enriched in pro residues.

The protein belongs to the early nodulin-like (ENODL) family.

The protein resides in the symbiosome. It is found in the peribacteroid membrane. Functionally, may act as a carbohydrate transporter. The chain is Early nodulin-55-1 from Glycine max (Soybean).